Here is a 536-residue protein sequence, read N- to C-terminus: Suppressor of cytokine signaling 5 (536 aa).

The tract at residues methionine 1–serine 50 is required for interaction with IL4R. The segment at serine 115–arginine 175 is disordered. Residues valine 158–serine 169 are compositionally biased toward low complexity. One can recognise an SH2 domain in the interval cysteine 381–leucine 476. The SOCS box domain maps to leucine 471–lysine 520.

As to quaternary structure, interacts with IL4R; inhibits IL4 signaling. Interacts with EGFR. Interacts with ELOB and ELOC; mediates EGFR ubiquitination and degradation. In terms of processing, phosphorylated. Phosphorylation is induced by EGF.

It functions in the pathway protein modification; protein ubiquitination. SOCS family proteins form part of a classical negative feedback system that regulates cytokine signal transduction. May be a substrate-recognition component of a SCF-like ECS (Elongin BC-CUL2/5-SOCS-box protein) E3 ubiquitin-protein ligase complex which mediates the ubiquitination and subsequent proteasomal degradation of target proteins. Inhibits for instance EGF signaling by mediating the degradation of the EGF receptor/EGFR. Involved in the regulation of T-helper cell differentiation by inhibiting of the IL4 signaling pathway which promotes differentiation into the Th2 phenotype. Can also partially inhibit IL6 and LIF signaling. This is Suppressor of cytokine signaling 5 (SOCS5) from Homo sapiens (Human).